The following is a 177-amino-acid chain: Ureidoglycolate lyase (177 aa).

This sequence belongs to the ureidoglycolate lyase family. As to quaternary structure, homodimer. It depends on Ni(2+) as a cofactor.

The enzyme catalyses (S)-ureidoglycolate = urea + glyoxylate. Its pathway is nitrogen metabolism; (S)-allantoin degradation. In terms of biological role, catalyzes the catabolism of the allantoin degradation intermediate (S)-ureidoglycolate, generating urea and glyoxylate. Involved in the utilization of allantoin as nitrogen source. The chain is Ureidoglycolate lyase from Burkholderia cepacia (Pseudomonas cepacia).